We begin with the raw amino-acid sequence, 343 residues long: Glutamine synthetase (343 aa).

The GS beta-grasp domain maps to Phe3–Pro87. In terms of domain architecture, GS catalytic spans Thr92–Val343. Positions 113, 115, 174, and 181 each coordinate Mg(2+). An L-glutamate-binding site is contributed by Glu279.

It belongs to the glutamine synthetase family. In terms of assembly, homooctamer and homotetramer. Mg(2+) is required as a cofactor.

It is found in the cytoplasm. The enzyme catalyses L-glutamate + NH4(+) + ATP = L-glutamine + ADP + phosphate + H(+). Functionally, catalyzes the ATP-dependent biosynthesis of glutamine from glutamate and ammonia. The protein is Glutamine synthetase of Streptomyces viridochromogenes.